A 399-amino-acid polypeptide reads, in one-letter code: Tryptophan synthase beta chain (399 aa).

At lysine 92 the chain carries N6-(pyridoxal phosphate)lysine.

The protein belongs to the TrpB family. In terms of assembly, tetramer of two alpha and two beta chains. Requires pyridoxal 5'-phosphate as cofactor.

The enzyme catalyses (1S,2R)-1-C-(indol-3-yl)glycerol 3-phosphate + L-serine = D-glyceraldehyde 3-phosphate + L-tryptophan + H2O. The protein operates within amino-acid biosynthesis; L-tryptophan biosynthesis; L-tryptophan from chorismate: step 5/5. The beta subunit is responsible for the synthesis of L-tryptophan from indole and L-serine. This chain is Tryptophan synthase beta chain, found in Acidithiobacillus ferrooxidans (strain ATCC 23270 / DSM 14882 / CIP 104768 / NCIMB 8455) (Ferrobacillus ferrooxidans (strain ATCC 23270)).